We begin with the raw amino-acid sequence, 76 residues long: Repressor protein of division inhibition gene dicB (76 aa).

The DNA-binding element occupies 13 to 33; it reads KTKLAQAAGIRLASLYSWKGD.

This protein is a repressor of division inhibition gene dicB. This Escherichia coli (strain K12) protein is Repressor protein of division inhibition gene dicB (dicC).